We begin with the raw amino-acid sequence, 506 residues long: Histidine ammonia-lyase (506 aa).

The segment at residues alanine 143–glycine 145 is a cross-link (5-imidazolinone (Ala-Gly)). At serine 144 the chain carries 2,3-didehydroalanine (Ser).

It belongs to the PAL/histidase family. In terms of processing, contains an active site 4-methylidene-imidazol-5-one (MIO), which is formed autocatalytically by cyclization and dehydration of residues Ala-Ser-Gly.

The protein localises to the cytoplasm. The enzyme catalyses L-histidine = trans-urocanate + NH4(+). Its pathway is amino-acid degradation; L-histidine degradation into L-glutamate; N-formimidoyl-L-glutamate from L-histidine: step 1/3. In Salmonella choleraesuis (strain SC-B67), this protein is Histidine ammonia-lyase.